The chain runs to 339 residues: Inositol 2-dehydrogenase (339 aa).

The protein belongs to the Gfo/Idh/MocA family. In terms of assembly, homotetramer.

The catalysed reaction is myo-inositol + NAD(+) = scyllo-inosose + NADH + H(+). Involved in the oxidation of myo-inositol (MI) to 2-keto-myo-inositol (2KMI or 2-inosose). This is Inositol 2-dehydrogenase from Leifsonia xyli subsp. xyli (strain CTCB07).